The primary structure comprises 464 residues: Glycine--tRNA ligase (464 aa).

Substrate is bound by residues arginine 104 and glutamate 175. Residues arginine 207–glutamate 209, phenylalanine 217–phenylalanine 222, glutamate 292–leucine 293, and glycine 336–arginine 339 each bind ATP. Phenylalanine 222–glutamate 226 contacts substrate. Glutamate 332–glycine 336 contacts substrate.

This sequence belongs to the class-II aminoacyl-tRNA synthetase family. Homodimer.

It is found in the cytoplasm. The enzyme catalyses tRNA(Gly) + glycine + ATP = glycyl-tRNA(Gly) + AMP + diphosphate. Functionally, catalyzes the attachment of glycine to tRNA(Gly). The chain is Glycine--tRNA ligase from Leptospira interrogans serogroup Icterohaemorrhagiae serovar Lai (strain 56601).